Consider the following 518-residue polypeptide: Beta-secretase 2 (518 aa).

The first 20 residues, Met-1 to Ala-20, serve as a signal peptide directing secretion. Residues Ala-21–Leu-62 constitute a propeptide that is removed on maturation. The Extracellular portion of the chain corresponds to Ala-21–Tyr-473. Positions Tyr-92–Ala-429 constitute a Peptidase A1 domain. Asp-110 is a catalytic residue. The N-linked (GlcNAc...) asparagine glycan is linked to Asn-170. 3 cysteine pairs are disulfide-bonded: Cys-233/Cys-433, Cys-292/Cys-457, and Cys-344/Cys-393. Asp-303 is a catalytic residue. A glycan (N-linked (GlcNAc...) asparagine) is linked at Asn-366. The helical transmembrane segment at Ala-474–Phe-494 threads the bilayer. Residues Arg-495 to Lys-518 are Cytoplasmic-facing.

It belongs to the peptidase A1 family. Monomer. Interacts with RTN3 and RTN4. In terms of processing, undergoes autoproteolytic cleavage. Post-translationally, glycosylated. As to expression, brain. Present in neurons within the hippocampus, frontal cortex and temporal cortex (at protein level). Expressed at low levels in most peripheral tissues and at higher levels in colon, kidney, pancreas, placenta, prostate, stomach and trachea. Expressed at low levels in the brain. Found in spinal cord, medulla oblongata, substantia nigra and locus coruleus. Expressed in the ductal epithelium of both normal and malignant prostate.

It localises to the cell membrane. Its subcellular location is the golgi apparatus. It is found in the endoplasmic reticulum. The protein resides in the endosome. The protein localises to the melanosome. It catalyses the reaction Broad endopeptidase specificity. Cleaves Glu-Val-Asn-Leu-|-Asp-Ala-Glu-Phe in the Swedish variant of Alzheimer's amyloid precursor protein.. Its function is as follows. Responsible for the proteolytic processing of the amyloid precursor protein (APP). Cleaves APP, between residues 690 and 691, leading to the generation and extracellular release of beta-cleaved soluble APP, and a corresponding cell-associated C-terminal fragment which is later released by gamma-secretase. It has also been shown that it can cleave APP between residues 671 and 672. Involved in the proteolytic shedding of PMEL at early stages of melanosome biogenesis. Cleaves PMEL within the M-beta fragment to release the amyloidogenic PMEL luminal fragment containing M-alpha and a small portion of M-beta N-terminus. This is a prerequisite step for subsequent processing and assembly of PMEL fibrils into amyloid sheets. Responsible also for the proteolytic processing of CLTRN in pancreatic beta cells. This chain is Beta-secretase 2 (BACE2), found in Homo sapiens (Human).